A 98-amino-acid polypeptide reads, in one-letter code: NADH-ubiquinone oxidoreductase chain 4L (98 aa).

3 helical membrane-spanning segments follow: residues 1–21 (MSLT…GLLM), 29–49 (SLLC…ITIL), and 61–81 (IILL…LVMV).

The protein belongs to the complex I subunit 4L family. Core subunit of respiratory chain NADH dehydrogenase (Complex I) which is composed of 45 different subunits.

It localises to the mitochondrion inner membrane. It catalyses the reaction a ubiquinone + NADH + 5 H(+)(in) = a ubiquinol + NAD(+) + 4 H(+)(out). Its function is as follows. Core subunit of the mitochondrial membrane respiratory chain NADH dehydrogenase (Complex I) which catalyzes electron transfer from NADH through the respiratory chain, using ubiquinone as an electron acceptor. Part of the enzyme membrane arm which is embedded in the lipid bilayer and involved in proton translocation. The protein is NADH-ubiquinone oxidoreductase chain 4L (MT-ND4L) of Artibeus jamaicensis (Jamaican fruit-eating bat).